Consider the following 304-residue polypeptide: Dipeptide transport system permease protein DppC (304 aa).

Residues 1 to 24 (MKTEHAKPLMTPEPNSPPPEDQYT) are disordered. 6 consecutive transmembrane segments (helical) span residues 41–61 (LAIV…FAPL), 108–128 (VGFF…LIAG), 141–161 (IFDI…VAIL), 164–184 (SLQN…GRLV), 227–247 (ATLG…LGLG), and 271–291 (WTVL…NMIG). The ABC transmembrane type-1 domain occupies 102–291 (ARLSLQVGFF…LVVLGFNMIG (190 aa)).

The protein belongs to the binding-protein-dependent transport system permease family. OppBC subfamily.

Its subcellular location is the cell membrane. Probably part of the ABC transporter Dpp involved in dipeptide transport. Responsible for the translocation of the substrate across the membrane. This is Dipeptide transport system permease protein DppC (dppC) from Alkalihalophilus pseudofirmus (strain ATCC BAA-2126 / JCM 17055 / OF4) (Bacillus pseudofirmus).